The chain runs to 377 residues: MLEGEKMENKKKKVLVFGATGNIGFSSLEIIEKENYELVGFSFNNNYEKALEIINRFPNALVFSPSVKTKNTVNSFEELLEKTNPDIILNALVGFSGLHITLLALKNNVDLALANKESLVVAGWLIEDLKRSSSSRIYPVDSEHSSLYDSLKNNNKEIKELIITCSGGPFYKKEFNELLNINFADAVKHPNWNMGKKISIDSATMMNKCFEIIEAYYLFNTKKIKVYQHGQSIIHSMIKFTDNSYIANMSVPDMKLSIQQGLSGYESKTNLINDLSFNNLNLTFSEIDLDKWKPIHWAYDFLENQNRAIPIIMNAANEEAIVLFEENKIKFLDIFEIIEKAIIALENTEVNDLKDILNLNKNTRKYVYDFSKNKFRY.

Residues Thr20, Gly21, Ile23, Asn46, and Asn115 each coordinate NADPH. Position 116 (Lys116) interacts with 1-deoxy-D-xylulose 5-phosphate. Glu117 serves as a coordination point for NADPH. Position 141 (Asp141) interacts with Mn(2+). 1-deoxy-D-xylulose 5-phosphate is bound by residues Ser142, Glu143, Ser166, and His189. Glu143 provides a ligand contact to Mn(2+). Residue Gly195 coordinates NADPH. 4 residues coordinate 1-deoxy-D-xylulose 5-phosphate: Ser202, Asn207, Lys208, and Glu211. Glu211 serves as a coordination point for Mn(2+).

This sequence belongs to the DXR family. Mg(2+) serves as cofactor. Mn(2+) is required as a cofactor.

The catalysed reaction is 2-C-methyl-D-erythritol 4-phosphate + NADP(+) = 1-deoxy-D-xylulose 5-phosphate + NADPH + H(+). It participates in isoprenoid biosynthesis; isopentenyl diphosphate biosynthesis via DXP pathway; isopentenyl diphosphate from 1-deoxy-D-xylulose 5-phosphate: step 1/6. Its function is as follows. Catalyzes the NADPH-dependent rearrangement and reduction of 1-deoxy-D-xylulose-5-phosphate (DXP) to 2-C-methyl-D-erythritol 4-phosphate (MEP). The chain is 1-deoxy-D-xylulose 5-phosphate reductoisomerase from Malacoplasma penetrans (strain HF-2) (Mycoplasma penetrans).